Here is a 149-residue protein sequence, read N- to C-terminus: UPF0179 protein MA_3685 (149 aa).

Belongs to the UPF0179 family.

The protein is UPF0179 protein MA_3685 of Methanosarcina acetivorans (strain ATCC 35395 / DSM 2834 / JCM 12185 / C2A).